Here is a 180-residue protein sequence, read N- to C-terminus: GTP cyclohydrolase 1 (180 aa).

Zn(2+) is bound by residues C71, H74, and C142.

The protein belongs to the GTP cyclohydrolase I family. As to quaternary structure, toroid-shaped homodecamer, composed of two pentamers of five dimers.

The catalysed reaction is GTP + H2O = 7,8-dihydroneopterin 3'-triphosphate + formate + H(+). Its pathway is cofactor biosynthesis; 7,8-dihydroneopterin triphosphate biosynthesis; 7,8-dihydroneopterin triphosphate from GTP: step 1/1. The protein is GTP cyclohydrolase 1 (folE) of Helicobacter pylori (strain J99 / ATCC 700824) (Campylobacter pylori J99).